A 544-amino-acid chain; its full sequence is CTP synthase (544 aa).

Positions 1–265 (MTQYIFITGG…DDLVVKHFGL (265 aa)) are amidoligase domain. CTP is bound at residue S13. UTP is bound at residue S13. ATP contacts are provided by residues 14 to 19 (SLGKGI) and D71. 2 residues coordinate Mg(2+): D71 and E139. CTP is bound by residues 146 to 148 (DIE), 186 to 191 (KTKPTQ), and K222. UTP is bound by residues 186 to 191 (KTKPTQ) and K222. The Glutamine amidotransferase type-1 domain maps to 290 to 541 (TVAMVGKYVN…IAAALDYQTE (252 aa)). Residue G351 participates in L-glutamine binding. The active-site Nucleophile; for glutamine hydrolysis is C378. Residues 379–382 (LGLQ), E402, and R469 contribute to the L-glutamine site. Catalysis depends on residues H514 and E516.

The protein belongs to the CTP synthase family. Homotetramer.

It carries out the reaction UTP + L-glutamine + ATP + H2O = CTP + L-glutamate + ADP + phosphate + 2 H(+). The catalysed reaction is L-glutamine + H2O = L-glutamate + NH4(+). The enzyme catalyses UTP + NH4(+) + ATP = CTP + ADP + phosphate + 2 H(+). Its pathway is pyrimidine metabolism; CTP biosynthesis via de novo pathway; CTP from UDP: step 2/2. Its activity is regulated as follows. Allosterically activated by GTP, when glutamine is the substrate; GTP has no effect on the reaction when ammonia is the substrate. The allosteric effector GTP functions by stabilizing the protein conformation that binds the tetrahedral intermediate(s) formed during glutamine hydrolysis. Inhibited by the product CTP, via allosteric rather than competitive inhibition. Functionally, catalyzes the ATP-dependent amination of UTP to CTP with either L-glutamine or ammonia as the source of nitrogen. Regulates intracellular CTP levels through interactions with the four ribonucleotide triphosphates. The chain is CTP synthase from Dichelobacter nodosus (strain VCS1703A).